A 138-amino-acid polypeptide reads, in one-letter code: Small ribosomal subunit protein uS12 (138 aa).

Residues Lys-33–Pro-55 form a disordered region.

The protein belongs to the universal ribosomal protein uS12 family. In terms of assembly, part of the 30S ribosomal subunit. Contacts proteins S8 and S17. May interact with IF1 in the 30S initiation complex. Interacts with BrxC.

Its function is as follows. With S4 and S5 plays an important role in translational accuracy. Interacts with and stabilizes bases of the 16S rRNA that are involved in tRNA selection in the A site and with the mRNA backbone. Located at the interface of the 30S and 50S subunits, it traverses the body of the 30S subunit contacting proteins on the other side and probably holding the rRNA structure together. The combined cluster of proteins S8, S12 and S17 appears to hold together the shoulder and platform of the 30S subunit. The sequence is that of Small ribosomal subunit protein uS12 (rpsL) from Bacillus subtilis (strain 168).